A 736-amino-acid chain; its full sequence is Prolyl oligopeptidase dbiP (736 aa).

Active-site charge relay system residues include Ser572, Asp656, and His692.

This sequence belongs to the peptidase S9A family. In terms of assembly, monomer.

It catalyses the reaction Hydrolysis of Pro-|-Xaa &gt;&gt; Ala-|-Xaa in oligopeptides.. Its pathway is mycotoxin biosynthesis. Its function is as follows. Prolyl oligopeptidase; part of the gene cluster that mediates the biosynthesis of dendrothelin A, a highly methylated cyclic dodecapeptide showing slight nematodicidal activity. Excises and catalyzes the macrocyclization of the methylated core peptide of dbiMA to yield dendrothelin A. DbiP works in a two-step fashion with an initial cleavage at the N-terminus, followed by a second cleavage at the C-terminus of the core peptide. According to this mechanism, the free N-terminus of the core peptide, generated by the first cleavage, attacks the covalent intermediate of the second cleavage, which results in macrocyclization of the core peptide. In Dendrothele bispora (strain CBS 962.96), this protein is Prolyl oligopeptidase dbiP.